The sequence spans 85 residues: Large ribosomal subunit protein bL27 (85 aa).

Positions 1-21 (MAHKKGVGSSRNGRDSDGQRL) are disordered.

Belongs to the bacterial ribosomal protein bL27 family.

This Citrifermentans bemidjiense (strain ATCC BAA-1014 / DSM 16622 / JCM 12645 / Bem) (Geobacter bemidjiensis) protein is Large ribosomal subunit protein bL27.